The primary structure comprises 81 residues: uncharacterized protein (81 aa).

This sequence to Synechocystis PCC 6803 ssr2439.

In terms of biological role, may have a regulatory function. This is an uncharacterized protein from Synechococcus elongatus (strain ATCC 33912 / PCC 7942 / FACHB-805) (Anacystis nidulans R2).